The sequence spans 87 residues: Cell division topological specificity factor (87 aa).

It belongs to the MinE family.

Prevents the cell division inhibition by proteins MinC and MinD at internal division sites while permitting inhibition at polar sites. This ensures cell division at the proper site by restricting the formation of a division septum at the midpoint of the long axis of the cell. This Aliivibrio fischeri (strain ATCC 700601 / ES114) (Vibrio fischeri) protein is Cell division topological specificity factor.